We begin with the raw amino-acid sequence, 376 residues long: Putative F-box protein At1g30930 (376 aa).

The region spanning methionine 1–leucine 44 is the F-box domain.

This is Putative F-box protein At1g30930 from Arabidopsis thaliana (Mouse-ear cress).